Consider the following 485-residue polypeptide: Hydrogenase transcriptional regulatory protein HoxA (485 aa).

The Response regulatory domain occupies 6 to 120; it reads TILVVDDEVR…QLVETVKEAV (115 aa). At Asp54 the chain carries 4-aspartylphosphate. Residues 166–392 enclose the Sigma-54 factor interaction domain; that stretch reads STESPMHAVI…ELQNEIQRMA (227 aa). ATP is bound by residues 192 to 199 and 264 to 273; these read GESGTGKE and EIGETSPAFQ. Residues 404 to 426 are disordered; it reads PLLGRRNGKRSAPLPAHGRLNGS. The H-T-H motif DNA-binding region spans 451–470; the sequence is NISRVASELGLSRVGLRNKL.

It is found in the cytoplasm. In terms of biological role, probable member of the two-component regulatory system involved in the regulation of the hydrogenase activity. HoxA is probably phosphorylated by a sensory component (which could be HoxX) and then acts in conjunction with sigma-54 as a transcriptional activator. The polypeptide is Hydrogenase transcriptional regulatory protein HoxA (hoxA) (Bradyrhizobium diazoefficiens (strain JCM 10833 / BCRC 13528 / IAM 13628 / NBRC 14792 / USDA 110)).